Reading from the N-terminus, the 165-residue chain is Cyanate hydratase (165 aa).

Positions 1 to 20 (MAQNKANTVSQLQSLKNKSG) are disordered. Residues Arg-90, Glu-93, and Ser-116 contribute to the active site.

It belongs to the cyanase family.

The enzyme catalyses cyanate + hydrogencarbonate + 3 H(+) = NH4(+) + 2 CO2. Functionally, catalyzes the reaction of cyanate with bicarbonate to produce ammonia and carbon dioxide. The polypeptide is Cyanate hydratase (Medicago truncatula (Barrel medic)).